We begin with the raw amino-acid sequence, 430 residues long: Serine--tRNA ligase (430 aa).

237-239 is a binding site for L-serine; that stretch reads TAE. 268–270 is a binding site for ATP; that stretch reads RSE. Glutamate 291 lines the L-serine pocket. Position 355–358 (355–358) interacts with ATP; the sequence is EISS. Serine 391 contacts L-serine.

This sequence belongs to the class-II aminoacyl-tRNA synthetase family. Type-1 seryl-tRNA synthetase subfamily. As to quaternary structure, homodimer. The tRNA molecule binds across the dimer.

Its subcellular location is the cytoplasm. The enzyme catalyses tRNA(Ser) + L-serine + ATP = L-seryl-tRNA(Ser) + AMP + diphosphate + H(+). It carries out the reaction tRNA(Sec) + L-serine + ATP = L-seryl-tRNA(Sec) + AMP + diphosphate + H(+). It functions in the pathway aminoacyl-tRNA biosynthesis; selenocysteinyl-tRNA(Sec) biosynthesis; L-seryl-tRNA(Sec) from L-serine and tRNA(Sec): step 1/1. In terms of biological role, catalyzes the attachment of serine to tRNA(Ser). Is also able to aminoacylate tRNA(Sec) with serine, to form the misacylated tRNA L-seryl-tRNA(Sec), which will be further converted into selenocysteinyl-tRNA(Sec). The chain is Serine--tRNA ligase from Enterobacter sp. (strain 638).